Consider the following 283-residue polypeptide: Pantothenate synthetase (283 aa).

30–37 (MGYFHDGH) contacts ATP. Histidine 37 functions as the Proton donor in the catalytic mechanism. Glutamine 61 is a binding site for (R)-pantoate. Glutamine 61 contributes to the beta-alanine binding site. ATP is bound at residue 147–150 (GSKD). Glutamine 153 contacts (R)-pantoate. ATP-binding positions include valine 176 and 184–187 (MSSR).

The protein belongs to the pantothenate synthetase family. As to quaternary structure, homodimer.

Its subcellular location is the cytoplasm. The enzyme catalyses (R)-pantoate + beta-alanine + ATP = (R)-pantothenate + AMP + diphosphate + H(+). The protein operates within cofactor biosynthesis; (R)-pantothenate biosynthesis; (R)-pantothenate from (R)-pantoate and beta-alanine: step 1/1. Its function is as follows. Catalyzes the condensation of pantoate with beta-alanine in an ATP-dependent reaction via a pantoyl-adenylate intermediate. The chain is Pantothenate synthetase from Desulforapulum autotrophicum (strain ATCC 43914 / DSM 3382 / VKM B-1955 / HRM2) (Desulfobacterium autotrophicum).